Consider the following 370-residue polypeptide: tRNA-specific 2-thiouridylase MnmA 1 (370 aa).

ATP-binding positions include 9 to 16 (GMSGGVDS) and Met35. The interval 95 to 97 (NPD) is interaction with target base in tRNA. Cys100 functions as the Nucleophile in the catalytic mechanism. An intrachain disulfide couples Cys100 to Cys196. Position 124 (Gly124) interacts with ATP. The interval 146–148 (KDQ) is interaction with tRNA. The active-site Cysteine persulfide intermediate is the Cys196. The segment at 306 to 307 (RY) is interaction with tRNA.

This sequence belongs to the MnmA/TRMU family.

It is found in the cytoplasm. The catalysed reaction is S-sulfanyl-L-cysteinyl-[protein] + uridine(34) in tRNA + AH2 + ATP = 2-thiouridine(34) in tRNA + L-cysteinyl-[protein] + A + AMP + diphosphate + H(+). Its function is as follows. Catalyzes the 2-thiolation of uridine at the wobble position (U34) of tRNA, leading to the formation of s(2)U34. The protein is tRNA-specific 2-thiouridylase MnmA 1 of Geobacillus kaustophilus (strain HTA426).